The sequence spans 941 residues: Probable respiratory burst oxidase homolog protein I (941 aa).

Residues 1–374 (MSMSFSGGTH…LYSLQDNWKR (374 aa)) are Cytoplasmic-facing. Disordered regions lie at residues 29 to 48 (PSLP…SGEE) and 103 to 166 (ERLT…SGTE). Residues 36–45 (SPSPSSSSSS) are compositionally biased toward low complexity. Over residues 103–117 (ERLTAGTNSKQQIQK) the composition is skewed to polar residues. EF-hand-like regions lie at residues 196–204 (SKDGYLFKS) and 232–243 (RRIMVDKINLQE). The EF-hand domain maps to 254-289 (ESFDSRLQIFFNMVKNGDGRITENEVKEIIILSASA). The Ca(2+) site is built by asparagine 269, aspartate 271, arginine 273, and glutamate 278. Phosphoserine is present on residues serine 346 and serine 350. Residues 375 to 395 (IWVLTLWFVIMAWLFMWKCYQ) traverse the membrane as a helical segment. Residues 396-407 (YKHKDAFHVMGY) are Extracellular-facing. A helical transmembrane segment spans residues 408–428 (CLVMAKGAAETLKFNMALILL). The Ferric oxidoreductase domain maps to 413–570 (KGAAETLKFN…LLLTVYVLLV (158 aa)). Over 429-514 (PVCRNTITYL…YFGLVNTPVG (86 aa)) the chain is Cytoplasmic. Residues 515-535 (ITGIIMVAFMLIAFTLASRRC) form a helical membrane-spanning segment. Residues 536–557 (RRNLTKLPKPFDKLTGYNAFWY) are Extracellular-facing. Residues 558 to 578 (SHHLLLTVYVLLVIHGVSLYL) form a helical membrane-spanning segment. Residues 579–586 (EHKWYRKT) are Cytoplasmic-facing. Residues 587-604 (VWMYLAVPVLLYVGERIF) traverse the membrane as a helical segment. Over 605–731 (RFFRSRLYTV…PYGAPAQDHW (127 aa)) the chain is Extracellular. The region spanning 609 to 729 (SRLYTVEICK…DGPYGAPAQD (121 aa)) is the FAD-binding FR-type domain. The helical transmembrane segment at 732 to 752 (KYDVVLLVGLGIGATPFVSIL) threads the bilayer. Residues 753–941 (RDLLNNIIKQ…TRFDFHKEQF (189 aa)) lie on the Cytoplasmic side of the membrane.

This sequence belongs to the RBOH (TC 5.B.1.3) family. As to quaternary structure, monomer and homodimer.

It is found in the membrane. Calcium-dependent NADPH oxidase that generates superoxide. In Arabidopsis thaliana (Mouse-ear cress), this protein is Probable respiratory burst oxidase homolog protein I (RBOHI).